A 218-amino-acid chain; its full sequence is Adenylate kinase (218 aa).

11 to 16 contributes to the ATP binding site; it reads GAGKGT. Residues 31 to 60 are NMP; that stretch reads STGDMFREAMANKTKVGLEAKSYIDKGNLV. Residues Thr32, Arg37, 58–60, 86–89, and Gln93 contribute to the AMP site; these read NLV and GFPR. Residues 127–165 form an LID region; the sequence is ARYMCKNCGATYNKLSKQPKVEGTCDRCGSHEFYQREDD. Arg128 lines the ATP pocket. Residues Cys131 and Cys134 each coordinate Zn(2+). 137-138 is a binding site for ATP; sequence TY. Cys151 and Cys154 together coordinate Zn(2+). 2 residues coordinate AMP: Arg162 and Arg173. Residue Gln201 participates in ATP binding.

This sequence belongs to the adenylate kinase family. In terms of assembly, monomer.

The protein resides in the cytoplasm. The catalysed reaction is AMP + ATP = 2 ADP. It participates in purine metabolism; AMP biosynthesis via salvage pathway; AMP from ADP: step 1/1. Functionally, catalyzes the reversible transfer of the terminal phosphate group between ATP and AMP. Plays an important role in cellular energy homeostasis and in adenine nucleotide metabolism. In Lactobacillus helveticus (strain DPC 4571), this protein is Adenylate kinase.